The primary structure comprises 647 residues: RalA-binding protein 1 (647 aa).

2 disordered regions span residues 1-151 (MTEC…EKKC) and 163-186 (WKEKKKKKKPTQEPEVPQTDAPSL). Residue threonine 2 is modified to N-acetylthreonine. Positions 24–33 (LTRTPSSEEI) are enriched in polar residues. A phosphoserine mark is found at serine 29, serine 30, and serine 34. A Phosphothreonine modification is found at threonine 44. 2 positions are modified to phosphoserine: serine 48 and serine 62. A compositionally biased stretch (basic and acidic residues) spans 52–68 (DILHEPPDIVSDDEKDH). Residue 69 to 74 (GKKKGK) participates in ATP binding. Over residues 69–79 (GKKKGKFKKKE) the composition is skewed to basic residues. Serine 92 and serine 93 each carry phosphoserine. Positions 102 to 118 (KMKRSKGIHVFKKPSFS) are enriched in basic residues. Residues 102–119 (KMKRSKGIHVFKKPSFSK) form a nuclear localization signal region. Residues 119-151 (KKKEKDFKIKEKPKEEKHKEEKHKEEKHKEKKC) show a composition bias toward basic and acidic residues. The segment at 154 to 219 (FTAADVVKQW…PAVFRECVDY (66 aa)) is mediates association with membranes and could form transmembrane domains. Residues 192-380 (APFADAVERT…VLLKQVTRPL (189 aa)) form the Rho-GAP domain. The mediates interaction with RALA and RALB stretch occupies residues 403 to 499 (RRQEFLLNCL…LTEQEELLAM (97 aa)). 418–425 (GGIKDFSK) provides a ligand contact to ATP. Serine 461 and serine 463 each carry phosphoserine. The interval 500-647 (EQFLRRQIAS…PSKDRKETPI (148 aa)) is mediates interaction with REPS1 and REPS2. 2 disordered regions span residues 525-550 (QSRQHGRSETEEYSSDSESESEDEEE) and 601-647 (EQQL…ETPI). The segment covering 535–550 (EEYSSDSESESEDEEE) has biased composition (acidic residues). Basic and acidic residues predominate over residues 628-647 (RAAKEQAKPSPSKDRKETPI). Residue serine 637 is modified to Phosphoserine.

Interacts with the GTP-bound form of RALA (via effector domain); during mitosis, recruits RALBP1 to the mitochondrion where it promotes DNM1L phosphorylation and mitochondrial fission. Interacts with DNM1L; mediates its mitotic kinase cyclin B-CDK1-mediated phosphorylation during mitosis to promote mitochondrial fission. Interacts with the mitotic kinase cyclin B-CDK1 during mitosis. Interacts with the GTP-bound form of RALB (via effector domain). Interacts with REPS1; the interaction is direct and does not affect RALA-binding nor GTPase activator activity of RALBP1. Interacts with REPS2; the interaction is direct and does not affect RALA-binding nor GTPase activator activity of RALBP1. Interacts with EPN1, NUMB and TFAP2A during interphase and mitosis. Interacts with AP2M1; as part of the AP2 complex. Interacts with CDC42. Interacts with RAC1. In terms of processing, tyrosine-phosphorylated upon stimulation of cells with EGF. May undergo proteolytic cleavage to give peptides which reassemble to form a transporter complex. Ubiquitously expressed.

The protein localises to the cell membrane. It localises to the cytoplasm. The protein resides in the cytosol. It is found in the cytoskeleton. Its subcellular location is the spindle pole. The protein localises to the nucleus. It localises to the mitochondrion. The catalysed reaction is an S-substituted glutathione(in) + ATP + H2O = an S-substituted glutathione(out) + ADP + phosphate + H(+). The enzyme catalyses ATP + H2O + xenobioticSide 1 = ADP + phosphate + xenobioticSide 2.. It carries out the reaction leukotriene C4(in) + ATP + H2O = leukotriene C4(out) + ADP + phosphate + H(+). Multifunctional protein that functions as a downstream effector of RALA and RALB. As a GTPase-activating protein/GAP can inactivate CDC42 and RAC1 by stimulating their GTPase activity. As part of the Ral signaling pathway, may also regulate ligand-dependent EGF and insulin receptors-mediated endocytosis. During mitosis, may act as a scaffold protein in the phosphorylation of EPSIN/EPN1 by the mitotic kinase cyclin B-CDK1, preventing endocytosis during that phase of the cell cycle. During mitosis, also controls mitochondrial fission as an effector of RALA. Recruited to mitochondrion by RALA, acts as a scaffold to foster the mitotic kinase cyclin B-CDK1-mediated phosphorylation and activation of DNM1L. In terms of biological role, could also function as a primary ATP-dependent active transporter for glutathione conjugates of electrophiles. May also actively catalyze the efflux of a wide range of substrates including xenobiotics like doxorubicin (DOX) contributing to cell multidrug resistance. The sequence is that of RalA-binding protein 1 from Rattus norvegicus (Rat).